Consider the following 254-residue polypeptide: Probable glucose-1-phosphate cytidylyltransferase (254 aa).

Substrate-binding positions include 6 to 10, 11 to 13, K23, T103, R108, and G126; these read LCGGK and GTR. Positions 127 and 232 each coordinate Mg(2+).

Belongs to the glucose-1-phosphate cytidylyltransferase family. Requires Mg(2+) as cofactor.

The enzyme catalyses alpha-D-glucose 1-phosphate + CTP + H(+) = CDP-D-glucose + diphosphate. In terms of biological role, catalyzes the transfer of a CMP moiety from CTP to glucose 1-phosphate. In Bacillus subtilis (strain 168), this protein is Probable glucose-1-phosphate cytidylyltransferase (yfnH).